The chain runs to 121 residues: Small ribosomal subunit protein bS21m (121 aa).

A mitochondrion-targeting transit peptide spans 1–14 (MNSSYFPGVLGVRW).

It belongs to the bacterial ribosomal protein bS21 family. In terms of assembly, component of the mitochondrial small ribosomal subunit (mt-SSU). Mature yeast 74S mitochondrial ribosomes consist of a small (37S) and a large (54S) subunit. The 37S small subunit contains a 15S ribosomal RNA (15S mt-rRNA) and at least 32 different proteins. The 54S large subunit contains a 21S rRNA (21S mt-rRNA) and at least 45 different proteins.

The protein localises to the mitochondrion. In terms of biological role, component of the mitochondrial ribosome (mitoribosome), a dedicated translation machinery responsible for the synthesis of mitochondrial genome-encoded proteins, including at least some of the essential transmembrane subunits of the mitochondrial respiratory chain. The mitoribosomes are attached to the mitochondrial inner membrane and translation products are cotranslationally integrated into the membrane. In Schizosaccharomyces pombe (strain 972 / ATCC 24843) (Fission yeast), this protein is Small ribosomal subunit protein bS21m (mrp21).